Reading from the N-terminus, the 359-residue chain is 3-dehydroquinate synthase (359 aa).

NAD(+) contacts are provided by residues 70-75 (DGEQYK), 105-109 (GVIGD), 129-130 (TT), Lys-142, Lys-151, and 169-172 (FYKT). 3 residues coordinate Zn(2+): Glu-184, His-247, and His-264.

This sequence belongs to the sugar phosphate cyclases superfamily. Dehydroquinate synthase family. It depends on Co(2+) as a cofactor. The cofactor is Zn(2+). NAD(+) serves as cofactor.

It localises to the cytoplasm. It carries out the reaction 7-phospho-2-dehydro-3-deoxy-D-arabino-heptonate = 3-dehydroquinate + phosphate. It participates in metabolic intermediate biosynthesis; chorismate biosynthesis; chorismate from D-erythrose 4-phosphate and phosphoenolpyruvate: step 2/7. Functionally, catalyzes the conversion of 3-deoxy-D-arabino-heptulosonate 7-phosphate (DAHP) to dehydroquinate (DHQ). The sequence is that of 3-dehydroquinate synthase from Francisella tularensis subsp. tularensis (strain FSC 198).